Consider the following 7260-residue polypeptide: Nonribosomal peptide synthetase ecdA (7260 aa).

Residues Thr-4–Gln-80 enclose the Carrier 1 domain. Ser-41 is subject to O-(pantetheine 4'-phosphoryl)serine. Residues Glu-134–Ala-549 form a condensation 1 region. The tract at residues Gln-575 to Cys-965 is adenylation 1. Residues Ala-1090–Asn-1166 enclose the Carrier 2 domain. Ser-1127 carries the post-translational modification O-(pantetheine 4'-phosphoryl)serine. The tract at residues Glu-1208–Asp-1628 is condensation 2. The interval Glu-1653–Arg-2054 is adenylation 2. The Carrier 3 domain occupies Thr-2188–Phe-2264. The residue at position 2225 (Ser-2225) is an O-(pantetheine 4'-phosphoryl)serine. Positions Gln-2314–Pro-2719 are condensation 3. The segment at Lys-2763–Arg-3156 is adenylation 3. The Carrier 4 domain occupies Gln-3287 to Val-3365. Ser-3324 carries the O-(pantetheine 4'-phosphoryl)serine modification. Residues Val-3417–Ile-3831 form a condensation 4 region. The interval Glu-3851 to Thr-4248 is adenylation 4. The Carrier 5 domain occupies Ala-4394–Ala-4471. An O-(pantetheine 4'-phosphoryl)serine modification is found at Ser-4431. The condensation 5 stretch occupies residues Glu-4510–Phe-4910. Residues Glu-4955–Arg-5357 are adenylation 5. In terms of domain architecture, Carrier 6 spans Ala-5496–Gly-5573. Residue Ser-5533 is modified to O-(pantetheine 4'-phosphoryl)serine. Residues Glu-5622 to Ile-6043 form a condensation 6 region. Residues Gln-6063 to Arg-6460 form an adenylation 6 region. Residues Ala-6592–Val-6668 form the Carrier 7 domain. Position 6629 is an O-(pantetheine 4'-phosphoryl)serine (Ser-6629). The segment at Leu-6718–Ser-7133 is condensation 7. The interval Cys-7241–Ile-7260 is disordered.

It belongs to the NRP synthetase family.

It participates in antifungal biosynthesis. Nonribosomal peptide synthetase; part of the gene cluster that mediates the biosynthesis of echinocandin B, a fungal lipidated cyclic hexapeptide that acts as an antifungal agent. Linoleoyl-AMP, produced by the fatty-acyl-AMP ligase ecdI, is transferred to the initiation carrier domain (T0) of ecdA. The linoleoyl-S-phosphopantetheinyl-T0 is sequentially extended with L-ornithine, L-threonine, L-proline, L-homotyrosine, L-threonine, and 4R-methyl-L-proline to form the linear hexapeptide. Thereafter, the terminal condensation (C7) performs macrocyclization of the NRPS product and the cyclic scaffold is released from ecdA. All six of the amino acid residues are hydroxylated, including 4R,5R-dihydroxy-L-ornithine, 4R-hydroxyl-L-proline, 3S,4S-dihydroxy-L-homotyrosine, and 3S-hydroxyl-4S-methyl-L-prolin. In the pathway, all the hydroxylation reactions are proposed to occur following completion of the cyclic peptide, so the unhydroxylated precursor produced by ecdA will undergo six rounds of hydroxylation. Five hydroxylase genes (ecdG, ecdH, ecdK, htyE and htyF) are embedded within the echinocandin B (ecd) and L-homotyrosine (hty) clusters. This Aspergillus rugulosus (Emericella rugulosa) protein is Nonribosomal peptide synthetase ecdA.